Reading from the N-terminus, the 200-residue chain is Small ribosomal subunit protein uS4 (200 aa).

The tract at residues threonine 22–arginine 42 is disordered. The S4 RNA-binding domain occupies serine 92–lysine 152.

This sequence belongs to the universal ribosomal protein uS4 family. As to quaternary structure, part of the 30S ribosomal subunit. Contacts protein S5. The interaction surface between S4 and S5 is involved in control of translational fidelity.

Its function is as follows. One of the primary rRNA binding proteins, it binds directly to 16S rRNA where it nucleates assembly of the body of the 30S subunit. With S5 and S12 plays an important role in translational accuracy. In Geobacillus stearothermophilus (Bacillus stearothermophilus), this protein is Small ribosomal subunit protein uS4 (rpsD).